The following is a 401-amino-acid chain: Probable aspartic-type endopeptidase TRV_05382 (401 aa).

The first 22 residues, Met1–Ala22, serve as a signal peptide directing secretion. Residues Asn80 and Asn102 are each glycosylated (N-linked (GlcNAc...) asparagine). The Peptidase A1 domain maps to Phe94–Ala398. The active site involves Asp110. An N-linked (GlcNAc...) asparagine glycan is attached at Asn282. Asp292 is a catalytic residue. N-linked (GlcNAc...) asparagine glycosylation is present at Asn329.

It belongs to the peptidase A1 family.

It is found in the secreted. In terms of biological role, probable aspartic-type endopeptidase which contributes to virulence. This Trichophyton verrucosum (strain HKI 0517) protein is Probable aspartic-type endopeptidase TRV_05382.